Here is a 107-residue protein sequence, read N- to C-terminus: Iron-sulfur cluster assembly protein CyaY (107 aa).

This sequence belongs to the frataxin family.

Its function is as follows. Involved in iron-sulfur (Fe-S) cluster assembly. May act as a regulator of Fe-S biogenesis. This Thioalkalivibrio sulfidiphilus (strain HL-EbGR7) protein is Iron-sulfur cluster assembly protein CyaY.